The sequence spans 440 residues: Tetratricopeptide repeat protein 5 (440 aa).

TPR repeat units lie at residues 7–61, 68–98, 103–130, 136–174, and 179–216; these read EEVK…EEVV, AQVL…AVKL, VEAW…SGAL, KVSL…AVQM, and GRSW…AEKV. The Nuclear export signal motif lies at 13-24; sequence LQKLQELVDQLY. The residue at position 203 (Ser203) is a Phosphoserine; by ATM. Ser221 carries the post-translational modification Phosphoserine; by CHEK2. A TPR 6 repeat occupies 224–253; it reads PDLHLNRATLHKYEESYGEALEGFSRAAAL. Residues 285-287 are mediates interaction with 28S rRNA of ribosome-coding tubulin; it reads KTK.

Interacts with JMY and p300/EP300; the interaction occurs in the nucleus and augments the association between JMY and p300/EP300 in response to DNA damage. Forms a complex with HSF1 and p300/EP300; these interactions augment chromatin-bound HSF1 and p300/EP300 histone acetyltransferase activity, resulting in enhanced heat-shock-responsive transcription. Interacts with PRMT5; the interaction is DNA damage-dependent and promotes PRMT5 interaction with p53/TP53 and subsequent methylation. Interacts with JMY; the interaction occurs in the cytoplasm and results in the inhibition of JYM's nucleation activity. Interacts with ribosome-coding tubulin (via 60S subunit 28S rRNA and protein uL24/RPL26) and the N-terminal of nascent tubulin polypeptide (via alpha-tubulin MREC motif and beta-tubulin MREI motif); these interactions result in tubulin mRNA-targeted degradation. Interacts with ATP5F1B; the interaction occurs in the mitochondria and results in ATP production decrease. Interacts with p53/TP53; the interaction occurs in the mitochondria and results in increased apoptosis. Post-translationally, phosphorylation by ATM kinase induces nuclear accumulation while interfering with nuclear export, and phosphorylation by CHEK2 kinase enhances nuclear stability.

Its subcellular location is the nucleus. The protein localises to the cytoplasm. It localises to the cytoplasmic vesicle. It is found in the mitochondrion matrix. In terms of biological role, cofactor involved in the regulation of various cellular mechanisms such as actin regulation, autophagy, chromatin regulation and DNA repair. In non-stress conditions, interacts with cofactor JMY in the cytoplasm which prevents JMY's actin nucleation activity and ability to activate the Arp2/3 complex. Acts as a negative regulator of nutrient stress-induced autophagy by preventing JMY's interaction with MAP1LC3B, thereby preventing autophagosome formation. Involves in tubulin autoregulation by promoting its degradation in response to excess soluble tubulin. To do so, associates with the active ribosome near the ribosome exit tunnel and with nascent tubulin polypeptides early during their translation, triggering tubulin mRNA-targeted degradation. Following DNA damage, phosphorylated by DNA damage responsive protein kinases ATM and CHEK2, leading to its nuclear accumulation and stability. Nuclear TTC5/STRAP promotes the assembly of a stress-responsive p53/TP53 coactivator complex, which includes the coactivators JMY and p300, thereby increasing p53/TP53-dependent transcription and apoptosis. Also recruits arginine methyltransferase PRMT5 to p53/TP53 when DNA is damaged, allowing PRMT5 to methylate p53/TP53. In DNA stress conditions, also prevents p53/TP53 degradation by E3 ubiquitin ligase MDM2. Upon heat-shock stress, forms a chromatin-associated complex with heat-shock factor 1 HSF1 and p300/EP300 to stimulate heat-shock-responsive transcription, thereby increasing cell survival. Mitochondrial TTC5/STRAP interacts with ATP synthase subunit beta ATP5F1B which decreased ATP synthase activity and lowers mitochondrial ATP production, thereby regulating cellular respiration and mitochondrial-dependent apoptosis. Mitochondrial TTC5/STRAP also regulates p53/TP53-mediated apoptosis. In Homo sapiens (Human), this protein is Tetratricopeptide repeat protein 5.